A 339-amino-acid polypeptide reads, in one-letter code: Ketol-acid reductoisomerase (NADP(+)) (339 aa).

The 182-residue stretch at 1 to 182 folds into the KARI N-terminal Rossmann domain; that stretch reads MRVYYDRDAD…GGGRAGIIET (182 aa). Residues 24-27, arginine 48, serine 51, serine 53, and 83-86 each bind NADP(+); these read YGSQ and DELQ. The active site involves histidine 108. Glycine 134 provides a ligand contact to NADP(+). The KARI C-terminal knotted domain maps to 183-328; it reads TFKEECETDL…EKLREMMPWI (146 aa). Aspartate 191, glutamate 195, glutamate 227, and glutamate 231 together coordinate Mg(2+). Residue serine 252 coordinates substrate.

The protein belongs to the ketol-acid reductoisomerase family. It depends on Mg(2+) as a cofactor.

The catalysed reaction is (2R)-2,3-dihydroxy-3-methylbutanoate + NADP(+) = (2S)-2-acetolactate + NADPH + H(+). The enzyme catalyses (2R,3R)-2,3-dihydroxy-3-methylpentanoate + NADP(+) = (S)-2-ethyl-2-hydroxy-3-oxobutanoate + NADPH + H(+). The protein operates within amino-acid biosynthesis; L-isoleucine biosynthesis; L-isoleucine from 2-oxobutanoate: step 2/4. It functions in the pathway amino-acid biosynthesis; L-valine biosynthesis; L-valine from pyruvate: step 2/4. In terms of biological role, involved in the biosynthesis of branched-chain amino acids (BCAA). Catalyzes an alkyl-migration followed by a ketol-acid reduction of (S)-2-acetolactate (S2AL) to yield (R)-2,3-dihydroxy-isovalerate. In the isomerase reaction, S2AL is rearranged via a Mg-dependent methyl migration to produce 3-hydroxy-3-methyl-2-ketobutyrate (HMKB). In the reductase reaction, this 2-ketoacid undergoes a metal-dependent reduction by NADPH to yield (R)-2,3-dihydroxy-isovalerate. In Azorhizobium caulinodans (strain ATCC 43989 / DSM 5975 / JCM 20966 / LMG 6465 / NBRC 14845 / NCIMB 13405 / ORS 571), this protein is Ketol-acid reductoisomerase (NADP(+)).